We begin with the raw amino-acid sequence, 209 residues long: Uracil phosphoribosyltransferase (209 aa).

5-phospho-alpha-D-ribose 1-diphosphate is bound by residues Arg-79, Arg-104, and 131–139 (DPMLATGGS). Uracil contacts are provided by residues Ile-194 and 199-201 (GDA). Asp-200 contributes to the 5-phospho-alpha-D-ribose 1-diphosphate binding site.

This sequence belongs to the UPRTase family. Mg(2+) serves as cofactor.

The catalysed reaction is UMP + diphosphate = 5-phospho-alpha-D-ribose 1-diphosphate + uracil. Its pathway is pyrimidine metabolism; UMP biosynthesis via salvage pathway; UMP from uracil: step 1/1. Its activity is regulated as follows. Allosterically activated by GTP. In terms of biological role, catalyzes the conversion of uracil and 5-phospho-alpha-D-ribose 1-diphosphate (PRPP) to UMP and diphosphate. The sequence is that of Uracil phosphoribosyltransferase from Clostridium perfringens (strain ATCC 13124 / DSM 756 / JCM 1290 / NCIMB 6125 / NCTC 8237 / Type A).